Reading from the N-terminus, the 936-residue chain is Phosphoenolpyruvate carboxylase (936 aa).

The tract at residues 1-20 (MSSLNLSAGPEPVSERPDDA) is disordered. Catalysis depends on residues histidine 164 and lysine 598.

It belongs to the PEPCase type 1 family. Requires Mg(2+) as cofactor.

The enzyme catalyses oxaloacetate + phosphate = phosphoenolpyruvate + hydrogencarbonate. Functionally, forms oxaloacetate, a four-carbon dicarboxylic acid source for the tricarboxylic acid cycle. This chain is Phosphoenolpyruvate carboxylase (ppc), found in Rhodopseudomonas palustris (strain ATCC BAA-98 / CGA009).